A 1407-amino-acid chain; its full sequence is DNA-directed RNA polymerase subunit beta' (1407 aa).

Zn(2+)-binding residues include Cys70, Cys72, Cys85, and Cys88. Positions 460, 462, and 464 each coordinate Mg(2+). Zn(2+)-binding residues include Cys814, Cys888, Cys895, and Cys898. Lys972 bears the N6-acetyllysine mark.

The protein belongs to the RNA polymerase beta' chain family. The RNAP catalytic core consists of 2 alpha, 1 beta, 1 beta' and 1 omega subunit. When a sigma factor is associated with the core the holoenzyme is formed, which can initiate transcription. The cofactor is Mg(2+). Requires Zn(2+) as cofactor.

The catalysed reaction is RNA(n) + a ribonucleoside 5'-triphosphate = RNA(n+1) + diphosphate. In terms of biological role, DNA-dependent RNA polymerase catalyzes the transcription of DNA into RNA using the four ribonucleoside triphosphates as substrates. The sequence is that of DNA-directed RNA polymerase subunit beta' from Escherichia coli O6:H1 (strain CFT073 / ATCC 700928 / UPEC).